The following is a 217-amino-acid chain: Holliday junction branch migration complex subunit RuvA (217 aa).

The segment at 1 to 64 (MIGKLTGILD…EDAIRLFGFE (64 aa)) is domain I. Residues 65–145 (TKVEQDWFCL…NAPHQSMPHF (81 aa)) form a domain II region. The tract at residues 146–160 (VSYSSETSSQAGTQH) is flexible linker. Residues 161–217 (TGHQHSMDALAALTKLGFERDQATHALQEAIKAFEGETPSSALLIRHSLKLLSSHLK) form a domain III region.

Belongs to the RuvA family. As to quaternary structure, homotetramer. Forms an RuvA(8)-RuvB(12)-Holliday junction (HJ) complex. HJ DNA is sandwiched between 2 RuvA tetramers; dsDNA enters through RuvA and exits via RuvB. An RuvB hexamer assembles on each DNA strand where it exits the tetramer. Each RuvB hexamer is contacted by two RuvA subunits (via domain III) on 2 adjacent RuvB subunits; this complex drives branch migration. In the full resolvosome a probable DNA-RuvA(4)-RuvB(12)-RuvC(2) complex forms which resolves the HJ.

Its subcellular location is the cytoplasm. The RuvA-RuvB-RuvC complex processes Holliday junction (HJ) DNA during genetic recombination and DNA repair, while the RuvA-RuvB complex plays an important role in the rescue of blocked DNA replication forks via replication fork reversal (RFR). RuvA specifically binds to HJ cruciform DNA, conferring on it an open structure. The RuvB hexamer acts as an ATP-dependent pump, pulling dsDNA into and through the RuvAB complex. HJ branch migration allows RuvC to scan DNA until it finds its consensus sequence, where it cleaves and resolves the cruciform DNA. This chain is Holliday junction branch migration complex subunit RuvA, found in Bartonella bacilliformis (strain ATCC 35685 / KC583 / Herrer 020/F12,63).